A 520-amino-acid chain; its full sequence is Cytochrome b5 reductase 4 (520 aa).

The residue at position 1 (Met-1) is an N-acetylmethionine. The disordered stretch occupies residues 1-27; the sequence is MLNVPSQAFPAPGSQQRVASQGRSKVP. Positions 13–23 are enriched in polar residues; the sequence is GSQQRVASQGR. The Cytochrome b5 heme-binding domain occupies 54 to 130; that stretch reads LIEVTEEELK…LKECLVGRMA (77 aa). Heme contacts are provided by His-89 and His-112. The CS domain maps to 164 to 255; that stretch reads PSSPSYDWFQ…KETVSWKCLG (92 aa). In terms of domain architecture, FAD-binding FR-type spans 272–384; it reads LYYRQCQLIS…SGPEGNFKVS (113 aa). FAD-binding positions include 364–379 and 391–423; these read DRLQIGDFVSVSGPEG and DLFLLAAGTGFTPMVTVLNHALTHMSSLRKVKL.

It belongs to the flavoprotein pyridine nucleotide cytochrome reductase family. FAD is required as a cofactor. In terms of tissue distribution, isoform 2 is expressed in testis, brain, skeletal muscle and in the male germline.

The protein resides in the endoplasmic reticulum. The catalysed reaction is 2 Fe(III)-[cytochrome b5] + NADH = 2 Fe(II)-[cytochrome b5] + NAD(+) + H(+). NADH-cytochrome b5 reductase involved in endoplasmic reticulum stress response pathway. Plays a critical role in protecting pancreatic beta-cells against oxidant stress, possibly by protecting the cell from excess buildup of reactive oxygen species (ROS). In Rattus norvegicus (Rat), this protein is Cytochrome b5 reductase 4 (Cyb5r4).